The primary structure comprises 391 residues: Elongation factor Tu (391 aa).

One can recognise a tr-type G domain in the interval 10–201 (KPHVNIGTIG…AVDAYIPTPE (192 aa)). Residues 19–26 (GHVDHGKT) are G1. Position 19-26 (19-26 (GHVDHGKT)) interacts with GTP. Position 26 (Thr-26) interacts with Mg(2+). The tract at residues 55–59 (GITIS) is G2. A G3 region spans residues 76-79 (DCPG). GTP contacts are provided by residues 76–80 (DCPGH) and 131–134 (NKVD). The interval 131–134 (NKVD) is G4. The interval 169-171 (SAL) is G5.

This sequence belongs to the TRAFAC class translation factor GTPase superfamily. Classic translation factor GTPase family. EF-Tu/EF-1A subfamily. Monomer.

The protein resides in the cytoplasm. The enzyme catalyses GTP + H2O = GDP + phosphate + H(+). In terms of biological role, GTP hydrolase that promotes the GTP-dependent binding of aminoacyl-tRNA to the A-site of ribosomes during protein biosynthesis. The polypeptide is Elongation factor Tu (Rhizobium johnstonii (strain DSM 114642 / LMG 32736 / 3841) (Rhizobium leguminosarum bv. viciae)).